Here is a 364-residue protein sequence, read N- to C-terminus: Fructose-bisphosphate aldolase B (364 aa).

Position 2 is an N-acetylalanine (alanine 2). At lysine 13 the chain carries N6-succinyllysine. A Phosphoserine modification is found at serine 36. Threonine 39 is modified (phosphothreonine). Beta-D-fructose 1,6-bisphosphate is bound at residue arginine 43. At serine 89 the chain carries Phosphoserine. The residue at position 119 (threonine 119) is a Phosphothreonine. An N6-succinyllysine modification is found at lysine 121. A Phosphoserine modification is found at serine 132. The active-site Proton acceptor is the glutamate 188. Lysine 230 functions as the Schiff-base intermediate with dihydroxyacetone-P in the catalytic mechanism. Phosphoserine occurs at positions 272, 276, 299, and 301. Position 272 to 274 (272 to 274 (SGG)) interacts with beta-D-fructose 1,6-bisphosphate. Arginine 304 lines the beta-D-fructose 1,6-bisphosphate pocket. Residue serine 309 is modified to Phosphoserine. Position 317 is an N6-succinyllysine (lysine 317).

This sequence belongs to the class I fructose-bisphosphate aldolase family. In terms of assembly, homotetramer. Interacts with BBS1, BBS2, BBS4 and BBS7. Forms a ternary complex with G6PD and TP53; this interaction is direct.

The protein localises to the cytoplasm. It is found in the cytosol. It localises to the cytoskeleton. Its subcellular location is the microtubule organizing center. The protein resides in the centrosome. The protein localises to the centriolar satellite. It catalyses the reaction beta-D-fructose 1,6-bisphosphate = D-glyceraldehyde 3-phosphate + dihydroxyacetone phosphate. The catalysed reaction is beta-D-fructose 1-phosphate = D-glyceraldehyde + dihydroxyacetone phosphate. Its pathway is carbohydrate degradation; glycolysis; D-glyceraldehyde 3-phosphate and glycerone phosphate from D-glucose: step 4/4. It participates in carbohydrate biosynthesis; gluconeogenesis. It functions in the pathway carbohydrate metabolism; fructose metabolism. In terms of biological role, catalyzes the aldol cleavage of fructose 1,6-biphosphate to form two triosephosphates dihydroxyacetone phosphate and D-glyceraldehyde 3-phosphate in glycolysis as well as the reverse stereospecific aldol addition reaction in gluconeogenesis. In fructolysis, metabolizes fructose 1-phosphate derived from the phosphorylation of dietary fructose by fructokinase into dihydroxyacetone phosphate and D-glyceraldehyde. Acts as an adapter independently of its enzymatic activity, exerts a tumor suppressor role by stabilizing the ternary complex with G6PD and TP53 to inhibit G6PD activity and keep oxidative pentose phosphate metabolism in check. The polypeptide is Fructose-bisphosphate aldolase B (Homo sapiens (Human)).